The sequence spans 557 residues: DNA mismatch repair protein MutL (557 aa).

This sequence belongs to the DNA mismatch repair MutL/HexB family.

Functionally, this protein is involved in the repair of mismatches in DNA. It is required for dam-dependent methyl-directed DNA mismatch repair. May act as a 'molecular matchmaker', a protein that promotes the formation of a stable complex between two or more DNA-binding proteins in an ATP-dependent manner without itself being part of a final effector complex. This is DNA mismatch repair protein MutL from Methanothrix thermoacetophila (strain DSM 6194 / JCM 14653 / NBRC 101360 / PT) (Methanosaeta thermophila).